A 353-amino-acid polypeptide reads, in one-letter code: NADH-quinone oxidoreductase subunit H (353 aa).

Helical transmembrane passes span 8-28 (LLVY…IFIW), 75-95 (GVFW…FAAI), 108-128 (IGIL…FMAG), 148-168 (VSYE…TGSL), 179-199 (VPFI…AMAE), 229-249 (LFYL…TTLF), 258-278 (LHPV…IIWV), 297-317 (FLLP…LIAP), and 319-339 (INTA…VLLF).

It belongs to the complex I subunit 1 family. NDH-1 is composed of 14 different subunits. Subunits NuoA, H, J, K, L, M, N constitute the membrane sector of the complex.

It is found in the cell membrane. The catalysed reaction is a quinone + NADH + 5 H(+)(in) = a quinol + NAD(+) + 4 H(+)(out). NDH-1 shuttles electrons from NADH, via FMN and iron-sulfur (Fe-S) centers, to quinones in the respiratory chain. The immediate electron acceptor for the enzyme in this species is believed to be ubiquinone. Couples the redox reaction to proton translocation (for every two electrons transferred, four hydrogen ions are translocated across the cytoplasmic membrane), and thus conserves the redox energy in a proton gradient. This subunit may bind ubiquinone. In Dehalococcoides mccartyi (strain CBDB1), this protein is NADH-quinone oxidoreductase subunit H.